A 437-amino-acid chain; its full sequence is GTPase Der (437 aa).

EngA-type G domains lie at 3 to 168 (PLIA…PESE) and 178 to 353 (VKLA…RNRS). GTP contacts are provided by residues 9–16 (GRPNVGKS), 56–60 (DTGGY), 120–123 (NKVE), 184–191 (GRPNVGKS), 231–235 (DTAGL), and 296–299 (NKWD). The KH-like domain occupies 354–437 (RKISTSSLNR…VPISLRFMEK (84 aa)).

This sequence belongs to the TRAFAC class TrmE-Era-EngA-EngB-Septin-like GTPase superfamily. EngA (Der) GTPase family. In terms of assembly, associates with the 50S ribosomal subunit.

GTPase that plays an essential role in the late steps of ribosome biogenesis. The chain is GTPase Der from Chlorobium limicola (strain DSM 245 / NBRC 103803 / 6330).